The primary structure comprises 809 residues: Eukaryotic translation initiation factor 3 subunit C (809 aa).

The segment at 1–102 is disordered; sequence MSRFFAASYE…DSDESDEASK (102 aa). Acidic residues-rich tracts occupy residues 18–30 and 37–59; these read SEED…EEEL and SEEE…DSDD. Residues 605–780 form the PCI domain; it reads FHEHINLDLI…SVLSIAKGAE (176 aa).

This sequence belongs to the eIF-3 subunit C family. In terms of assembly, component of the eukaryotic translation initiation factor 3 (eIF-3) complex.

Its subcellular location is the cytoplasm. Its function is as follows. Component of the eukaryotic translation initiation factor 3 (eIF-3) complex, which is involved in protein synthesis of a specialized repertoire of mRNAs and, together with other initiation factors, stimulates binding of mRNA and methionyl-tRNAi to the 40S ribosome. The eIF-3 complex specifically targets and initiates translation of a subset of mRNAs involved in cell proliferation. The chain is Eukaryotic translation initiation factor 3 subunit C from Vanderwaltozyma polyspora (strain ATCC 22028 / DSM 70294 / BCRC 21397 / CBS 2163 / NBRC 10782 / NRRL Y-8283 / UCD 57-17) (Kluyveromyces polysporus).